Here is an 880-residue protein sequence, read N- to C-terminus: Protein transport protein SEC23 A (880 aa).

Positions 1 to 13 (MANLPKSSVNYPG) are enriched in polar residues. Positions 1–95 (MANLPKSSVN…PPGPPVFNTP (95 aa)) are disordered. Residues 20-36 (PNRPSPQPDRTPVPHSP) are compositionally biased toward pro residues. The segment covering 57–70 (MSSPSMKSPSLLSP) has biased composition (low complexity). Zn(2+) contacts are provided by Cys-204, Cys-207, Cys-226, and Cys-229. Residues 204–229 (CLNCGAYSNPYSSILIGSGQWQCVIC) are zinc finger-like.

This sequence belongs to the SEC23/SEC24 family. SEC24 subfamily. Component of the coat protein complex II (COPII), composed of at least five proteins: the Sec23/24 complex, the Sec13/31 complex and Sar1. As to expression, mostly expressed in seedlings, roots, cotyledons, leaves, trichomes, leaf primordia and flowers, and, to a lower extent, in mature siliques.

The protein localises to the cytoplasmic vesicle. It localises to the COPII-coated vesicle membrane. The protein resides in the endoplasmic reticulum membrane. Its subcellular location is the membrane. In terms of biological role, component of the coat protein complex II (COPII) which promotes the formation of transport vesicles from the endoplasmic reticulum (ER). The coat has two main functions, the physical deformation of the endoplasmic reticulum membrane into vesicles and the selection of cargo molecules. May contribute to COPII-coated vesicles formation and ER-Golgi vesicle transport. Together with SEC23D, essential for pollen wall development and exine patterning, probably by regulating endoplasmic reticulum (ER) export of lipids and proteins (e.g. sporopollenin) necessary for pollen wall formation. Also involved in plastid physiology in anther tapetal cells. The protein is Protein transport protein SEC23 A of Arabidopsis thaliana (Mouse-ear cress).